The sequence spans 411 residues: Carbohydrate sulfotransferase 5 (411 aa).

Topologically, residues 1 to 30 (MGMRARVPKVAHSTRRPPAARMWLPRFSSK) are cytoplasmic. A helical; Signal-anchor for type II membrane protein membrane pass occupies residues 31–48 (TVTVLLLAQTTCLLLFII). Topologically, residues 49–411 (SRPGPSSPAG…PDHFSWASPD (363 aa)) are lumenal. 71–77 (WRSGSSF) is a 3'-phosphoadenylyl sulfate binding site. Asparagine 138 carries an N-linked (GlcNAc...) asparagine glycan. 224–232 (RDPRAVLRS) is a binding site for 3'-phosphoadenylyl sulfate. 2 N-linked (GlcNAc...) asparagine glycosylation sites follow: asparagine 327 and asparagine 350.

This sequence belongs to the sulfotransferase 1 family. Gal/GlcNAc/GalNAc subfamily. Predominantly expressed in small and large intestines and colon. Weakly expressed in lymphocytes. Not expressed in other tissues. Down-regulated in colonic adenocarcinomas.

Its subcellular location is the golgi apparatus membrane. In terms of biological role, sulfotransferase that utilizes 3'-phospho-5'-adenylyl sulfate (PAPS) as sulfonate donor to catalyze the transfer of sulfate to position 6 of non-reducing N-acetylglucosamine (GlcNAc) residues and O-linked sugars of mucin-type acceptors. Acts on the non-reducing terminal GlcNAc of short carbohydrate substrates. However, it does not transfer sulfate to longer carbohydrate substrates that have poly-N-acetyllactosamine structures. Has no activity toward keratan. Not involved in generating HEV-expressed ligands for SELL. Its substrate specificity may be influenced by its subcellular location. This Homo sapiens (Human) protein is Carbohydrate sulfotransferase 5 (CHST5).